The primary structure comprises 348 residues: Dihydroorotase (348 aa).

The Zn(2+) site is built by histidine 17 and histidine 19. Substrate-binding positions include 19–21 (HLR) and asparagine 45. Residues lysine 103, histidine 140, and histidine 178 each contribute to the Zn(2+) site. N6-carboxylysine is present on lysine 103. Position 140 (histidine 140) interacts with substrate. Leucine 223 contacts substrate. Aspartate 251 is a Zn(2+) binding site. The active site involves aspartate 251. Substrate-binding residues include histidine 255 and alanine 267.

Belongs to the metallo-dependent hydrolases superfamily. DHOase family. Class II DHOase subfamily. Homodimer. It depends on Zn(2+) as a cofactor.

It carries out the reaction (S)-dihydroorotate + H2O = N-carbamoyl-L-aspartate + H(+). The protein operates within pyrimidine metabolism; UMP biosynthesis via de novo pathway; (S)-dihydroorotate from bicarbonate: step 3/3. Functionally, catalyzes the reversible cyclization of carbamoyl aspartate to dihydroorotate. This Yersinia pseudotuberculosis serotype O:1b (strain IP 31758) protein is Dihydroorotase.